The chain runs to 126 residues: Aspartate 1-decarboxylase (126 aa).

The active-site Schiff-base intermediate with substrate; via pyruvic acid is the Ser-25. Residue Ser-25 is modified to Pyruvic acid (Ser). Residue Thr-57 participates in substrate binding. Tyr-58 acts as the Proton donor in catalysis. Residue 73–75 coordinates substrate; sequence GAA.

The protein belongs to the PanD family. In terms of assembly, heterooctamer of four alpha and four beta subunits. Pyruvate is required as a cofactor. Is synthesized initially as an inactive proenzyme, which is activated by self-cleavage at a specific serine bond to produce a beta-subunit with a hydroxyl group at its C-terminus and an alpha-subunit with a pyruvoyl group at its N-terminus.

It is found in the cytoplasm. It catalyses the reaction L-aspartate + H(+) = beta-alanine + CO2. Its pathway is cofactor biosynthesis; (R)-pantothenate biosynthesis; beta-alanine from L-aspartate: step 1/1. Its function is as follows. Catalyzes the pyruvoyl-dependent decarboxylation of aspartate to produce beta-alanine. This Azotobacter vinelandii (strain DJ / ATCC BAA-1303) protein is Aspartate 1-decarboxylase.